The chain runs to 31 residues: Delta-conotoxin-like ErVIA (31 aa).

Positions 1–4 are excised as a propeptide; it reads LNKR. 3 disulfide bridges follow: Cys-5–Cys-21, Cys-12–Cys-25, and Cys-20–Cys-29.

It belongs to the conotoxin O1 superfamily. In terms of tissue distribution, expressed by the venom duct.

It is found in the secreted. Functionally, this toxin activates voltage-gated sodium channels. It shifts the voltage-dependence of activation to more hyperpolarized potentials but has only little effect on channel inactivation. It is active on Nav1.3/SCN3A (EC(50)=3.98 nM), Nav1.4/SCN4A (EC(50)=4.99 nM), Nav1.6/SCN8A (EC(50)=1.27 nM) and Nav1.7/SCN9A (EC(50)=2.42 nM) voltage-gated sodium channels. In vivo, it induces nocifensive or pain-like behaviors in mice when injected intraplantarly. In Conus eburneus (Ivory cone), this protein is Delta-conotoxin-like ErVIA.